We begin with the raw amino-acid sequence, 371 residues long: Vasopressin V2 receptor (371 aa).

The disordered stretch occupies residues 1 to 27 (MILVSTTSAVPGALSSPSSPSNSSQEE). At 1–38 (MILVSTTSAVPGALSSPSSPSNSSQEELLDDRDPLLVR) the chain is on the extracellular side. Positions 15 to 24 (SSPSSPSNSS) are enriched in low complexity. N-linked (GlcNAc...) asparagine glycosylation is present at Asn22. The helical transmembrane segment at 39–63 (AELALLSTIFVAVALSNGLVLGALI) threads the bilayer. Topologically, residues 64 to 77 (RRGRRGRWAPMHVF) are cytoplasmic. Residues 78–98 (ISHLCLADLAVALFQVLPQLA) form a helical membrane-spanning segment. The Extracellular segment spans residues 99–113 (WDATDRFHGPDALCR). The chain crosses the membrane as a helical span at residues 114-135 (AVKYLQMVGMYASSYMILAMTL). Residues 136-159 (DRHRAICRPMLAYRHGGGARWNRP) are Cytoplasmic-facing. Residues 160-180 (VLVAWAFSLLLSLPQLFIFAQ) traverse the membrane as a helical segment. The Extracellular portion of the chain corresponds to 181-200 (RDVGNGSGVFDCWARFAEPW). Asn185 carries an N-linked (GlcNAc...) asparagine glycan. The helical transmembrane segment at 201 to 220 (GLRAYVTWIALMVFVAPALG) threads the bilayer. The Cytoplasmic portion of the chain corresponds to 221-271 (IAACQVLIFREIHASLVPGPSERAGRRRRGHRTGSPSEGAHVSAAMAKTVR). Residues 240–259 (PSERAGRRRRGHRTGSPSEG) form a disordered region. A helical transmembrane segment spans residues 272–293 (MTLVIVIVYVLCWAPFFLVQLW). Residues 294 to 308 (AAWDPEAPLERPPFV) are Extracellular-facing. The chain crosses the membrane as a helical span at residues 309–328 (LLMLLASLNSCTNPWIYASF). Topologically, residues 329-371 (SSSVSSELRSLLCCAQRHTTHSLGPQDESCATASSSLMKDTPS) are cytoplasmic. S-palmitoyl cysteine attachment occurs at residues Cys341 and Cys342. The segment at 349–371 (HSLGPQDESCATASSSLMKDTPS) is disordered. Residues 357-371 (SCATASSSLMKDTPS) are compositionally biased toward polar residues.

The protein belongs to the G-protein coupled receptor 1 family. Vasopressin/oxytocin receptor subfamily. In terms of assembly, interacts with ARRDC4. Identified in a complex containing at least ARRDC4, V2R and HGS. Interacts with TMEM147. In terms of tissue distribution, highly expressed in kidney (at protein level) and moderately expressed in liver (at protein level). No or extremely low expression in left ventricule, muscle, bone and brain (at protein level).

It localises to the cell membrane. Receptor for arginine vasopressin. The activity of this receptor is mediated by G proteins which activate adenylate cyclase. Involved in renal water reabsorption. The sequence is that of Vasopressin V2 receptor (Avpr2) from Mus musculus (Mouse).